A 296-amino-acid polypeptide reads, in one-letter code: Protoheme IX farnesyltransferase (296 aa).

8 consecutive transmembrane segments (helical) span residues Val8–Ala28, Trp35–Ile55, Ala84–Thr104, Val107–Phe127, Val132–Ala152, Ala162–Phe182, Phe215–Val235, and Val264–Asn284.

It belongs to the UbiA prenyltransferase family. Protoheme IX farnesyltransferase subfamily.

It is found in the cell inner membrane. It carries out the reaction heme b + (2E,6E)-farnesyl diphosphate + H2O = Fe(II)-heme o + diphosphate. Its pathway is porphyrin-containing compound metabolism; heme O biosynthesis; heme O from protoheme: step 1/1. Its function is as follows. Converts heme B (protoheme IX) to heme O by substitution of the vinyl group on carbon 2 of heme B porphyrin ring with a hydroxyethyl farnesyl side group. This Marinomonas sp. (strain MWYL1) protein is Protoheme IX farnesyltransferase.